The chain runs to 229 residues: Urease accessory protein UreF (229 aa).

This sequence belongs to the UreF family. As to quaternary structure, ureD, UreF and UreG form a complex that acts as a GTP-hydrolysis-dependent molecular chaperone, activating the urease apoprotein by helping to assemble the nickel containing metallocenter of UreC. The UreE protein probably delivers the nickel.

The protein resides in the cytoplasm. Required for maturation of urease via the functional incorporation of the urease nickel metallocenter. The chain is Urease accessory protein UreF from Staphylococcus aureus (strain USA300).